We begin with the raw amino-acid sequence, 290 residues long: GTPase Era (290 aa).

The Era-type G domain maps to 2 to 169 (KSGFAAILGR…KNKIYENFSE (168 aa)). The G1 stretch occupies residues 10–17 (GRPSTGKS). 10-17 (GRPSTGKS) lines the GTP pocket. Residues 36–40 (QTTRN) are G2. Residues 57 to 60 (DTPG) are G3. Residues 57 to 61 (DTPGF) and 119 to 122 (NKID) each bind GTP. The tract at residues 119–122 (NKID) is G4. The interval 148–150 (ISA) is G5. A KH type-2 domain is found at 200–276 (LKEELPYSLY…NLFLQVKLKK (77 aa)).

Belongs to the TRAFAC class TrmE-Era-EngA-EngB-Septin-like GTPase superfamily. Era GTPase family. In terms of assembly, monomer.

Its subcellular location is the cytoplasm. It is found in the cell inner membrane. Functionally, an essential GTPase that binds both GDP and GTP, with rapid nucleotide exchange. Plays a role in 16S rRNA processing and 30S ribosomal subunit biogenesis and possibly also in cell cycle regulation and energy metabolism. The chain is GTPase Era from Borreliella burgdorferi (strain ATCC 35210 / DSM 4680 / CIP 102532 / B31) (Borrelia burgdorferi).